We begin with the raw amino-acid sequence, 414 residues long: Esterase FrsA (414 aa).

It belongs to the FrsA family.

It carries out the reaction a carboxylic ester + H2O = an alcohol + a carboxylate + H(+). Catalyzes the hydrolysis of esters. This Escherichia coli (strain K12 / DH10B) protein is Esterase FrsA.